Consider the following 437-residue polypeptide: Protein arginine methyltransferase NDUFAF7 homolog, mitochondrial (437 aa).

The tract at residues 21-49 (RPNLGATGTPKMEPPKEQPEASSKAESGH) is disordered.

The protein belongs to the NDUFAF7 family.

The protein localises to the mitochondrion. The catalysed reaction is L-arginyl-[protein] + 2 S-adenosyl-L-methionine = N(omega),N(omega)'-dimethyl-L-arginyl-[protein] + 2 S-adenosyl-L-homocysteine + 2 H(+). In terms of biological role, arginine methyltransferase involved in the assembly or stability of mitochondrial NADH:ubiquinone oxidoreductase complex (complex I). The protein is Protein arginine methyltransferase NDUFAF7 homolog, mitochondrial of Drosophila melanogaster (Fruit fly).